The chain runs to 93 residues: Cell division protein CrgA (93 aa).

2 helical membrane passes run 31–51 and 70–90; these read VWFV…LMVF and LGPW…LLTM.

The protein belongs to the CrgA family.

It localises to the cell membrane. Involved in cell division. The polypeptide is Cell division protein CrgA (Mycobacterium avium (strain 104)).